The chain runs to 327 residues: Mitochondrial thiamine pyrophosphate carrier 1 (327 aa).

Solcar repeat units lie at residues 13 to 114, 126 to 214, and 222 to 317; these read GSKL…AAQL, PAAA…LRAP, and FWGG…VLRA. 6 consecutive transmembrane segments (helical) span residues 16–36, 95–111, 132–152, 189–209, 223–245, and 292–309; these read LQVV…IAPL, LLYI…YRSA, FVAG…LDLL, GIGP…AAYE, WGGQ…VFPL, and GLTV…VTMW.

It belongs to the mitochondrial carrier (TC 2.A.29) family.

The protein resides in the mitochondrion inner membrane. Its function is as follows. Mitochondrial transporter that mediates uptake of thiamine pyrophosphate (ThPP) into mitochondria. The protein is Mitochondrial thiamine pyrophosphate carrier 1 (TPC1) of Pyricularia oryzae (strain 70-15 / ATCC MYA-4617 / FGSC 8958) (Rice blast fungus).